The following is a 200-amino-acid chain: Small ribosomal subunit protein uS4 (200 aa).

A disordered region spans residues 22–42 (TGKELQKRPYPPGQHGPGQRR). The 61-residue stretch at 92-152 (SRLDNLVYRL…EKSRNLQVIK (61 aa)) folds into the S4 RNA-binding domain.

Belongs to the universal ribosomal protein uS4 family. Part of the 30S ribosomal subunit. Contacts protein S5. The interaction surface between S4 and S5 is involved in control of translational fidelity.

Functionally, one of the primary rRNA binding proteins, it binds directly to 16S rRNA where it nucleates assembly of the body of the 30S subunit. Its function is as follows. With S5 and S12 plays an important role in translational accuracy. The protein is Small ribosomal subunit protein uS4 (rpsD) of Geobacillus stearothermophilus (Bacillus stearothermophilus).